A 315-amino-acid polypeptide reads, in one-letter code: Methionyl-tRNA formyltransferase (315 aa).

Position 113–116 (113–116 (SLLP)) interacts with (6S)-5,6,7,8-tetrahydrofolate.

It belongs to the Fmt family.

The catalysed reaction is L-methionyl-tRNA(fMet) + (6R)-10-formyltetrahydrofolate = N-formyl-L-methionyl-tRNA(fMet) + (6S)-5,6,7,8-tetrahydrofolate + H(+). Attaches a formyl group to the free amino group of methionyl-tRNA(fMet). The formyl group appears to play a dual role in the initiator identity of N-formylmethionyl-tRNA by promoting its recognition by IF2 and preventing the misappropriation of this tRNA by the elongation apparatus. This is Methionyl-tRNA formyltransferase from Escherichia coli O17:K52:H18 (strain UMN026 / ExPEC).